The primary structure comprises 548 residues: 4-coumarate--CoA ligase CCL1 (548 aa).

ATP contacts are provided by residues 195–203 (SSGTTGLPK), 337–342 (QGYGMT), Asp426, 438–441 (IVDR), and Lys532. The interval 268 to 337 (EISKLLELIE…EKLPHAKLGQ (70 aa)) is SBD1. The SBD2 stretch occupies residues 338–405 (GYGMTEAGPV…IRGKQIMKGY (68 aa)).

The protein belongs to the ATP-dependent AMP-binding enzyme family. Mostly expressed in glandular trichomes (lupulin glands) after flowering, and, to a lower extent, in stems, leaves, cones and flowers.

The protein resides in the cytoplasm. It catalyses the reaction (E)-4-coumarate + ATP + CoA = (E)-4-coumaroyl-CoA + AMP + diphosphate. Its pathway is secondary metabolite biosynthesis. Involved in the biosynthesis of prenylated phenolics natural products which contribute to the bitter taste of beer and display broad biological activities. Catalyzes the ligation of CoA on (E)-4-coumarate to produce (E)-4-coumaroyl-CoA. In Humulus lupulus (European hop), this protein is 4-coumarate--CoA ligase CCL1.